The following is a 173-amino-acid chain: Protein tyrosine phosphatase type IVA 3 (173 aa).

The Tyrosine-protein phosphatase domain maps to 8 to 161 (APVEVSYRHM…YRPKQRLRFK (154 aa)). Cys49 and Cys104 are joined by a disulfide. Asp72 serves as the catalytic Proton donor. The active-site Phosphocysteine intermediate is Cys104. Arg110 contributes to the substrate binding site. Cys170 carries the cysteine methyl ester modification. The S-farnesyl cysteine moiety is linked to residue Cys170. Residues 171 to 173 (CVM) constitute a propeptide, removed in mature form.

The protein belongs to the protein-tyrosine phosphatase family. Interacts with tubulin. Post-translationally, farnesylated. Farnesylation is required for membrane targeting. Unfarnesylated forms are shifted into the nucleus. Present in the small intestine, where it is located in the differentiated epithelial cells of the villus but not in the proliferating crypt cells (at protein level). Expressed in heart and skeletal muscle, and at lower levels in lung, spleen and testis.

The protein localises to the cell membrane. The protein resides in the early endosome. It carries out the reaction O-phospho-L-tyrosyl-[protein] + H2O = L-tyrosyl-[protein] + phosphate. Inhibited by sodium orthovanadate and peroxovanadium compounds, and by pentamidine. In terms of biological role, protein tyrosine phosphatase which stimulates progression from G1 into S phase during mitosis. Enhances cell proliferation, cell motility and invasive activity, and promotes cancer metastasis. May be involved in the progression of cardiac hypertrophy by inhibiting intracellular calcium mobilization in response to angiotensin II. The sequence is that of Protein tyrosine phosphatase type IVA 3 (Ptp4a3) from Mus musculus (Mouse).